The primary structure comprises 150 residues: Cytochrome c-type biogenesis protein CcmE (150 aa).

The Cytoplasmic segment spans residues 1-9 (MRNLKKTRR). Residues 10–30 (IQILLVAGGALVLSTALIGYG) traverse the membrane as a helical; Signal-anchor for type II membrane protein segment. The Periplasmic portion of the chain corresponds to 31-150 (MRDGINFFRA…VYRDPAQPEG (120 aa)). Residues His-123 and Tyr-127 each contribute to the heme site.

This sequence belongs to the CcmE/CycJ family.

The protein localises to the cell inner membrane. Heme chaperone required for the biogenesis of c-type cytochromes. Transiently binds heme delivered by CcmC and transfers the heme to apo-cytochromes in a process facilitated by CcmF and CcmH. The sequence is that of Cytochrome c-type biogenesis protein CcmE from Rhodobacter capsulatus (strain ATCC BAA-309 / NBRC 16581 / SB1003).